The sequence spans 507 residues: Histidine ammonia-lyase (507 aa).

Residues 141 to 143 constitute a cross-link (5-imidazolinone (Ala-Gly)); sequence ASG. S142 is modified (2,3-didehydroalanine (Ser)).

It belongs to the PAL/histidase family. Post-translationally, contains an active site 4-methylidene-imidazol-5-one (MIO), which is formed autocatalytically by cyclization and dehydration of residues Ala-Ser-Gly.

It localises to the cytoplasm. It carries out the reaction L-histidine = trans-urocanate + NH4(+). It participates in amino-acid degradation; L-histidine degradation into L-glutamate; N-formimidoyl-L-glutamate from L-histidine: step 1/3. In Burkholderia pseudomallei (strain 1106a), this protein is Histidine ammonia-lyase.